The sequence spans 214 residues: Large ribosomal subunit protein uL1 (214 aa).

The protein belongs to the universal ribosomal protein uL1 family. As to quaternary structure, part of the 50S ribosomal subunit.

In terms of biological role, binds directly to 23S rRNA. Probably involved in E site tRNA release. Its function is as follows. Protein L1 is also a translational repressor protein, it controls the translation of its operon by binding to its mRNA. This chain is Large ribosomal subunit protein uL1, found in Methanopyrus kandleri (strain AV19 / DSM 6324 / JCM 9639 / NBRC 100938).